Consider the following 89-residue polypeptide: MSLDTAEKQKLIETHQVHATDTGSVEVQVAMLSKRISKLSEHLQGNIHDFASRQGLLKMIGKRKRLLSYIKDKNVQKYQDLVKKIGIRG.

Belongs to the universal ribosomal protein uS15 family. As to quaternary structure, part of the 30S ribosomal subunit. Forms a bridge to the 50S subunit in the 70S ribosome, contacting the 23S rRNA.

One of the primary rRNA binding proteins, it binds directly to 16S rRNA where it helps nucleate assembly of the platform of the 30S subunit by binding and bridging several RNA helices of the 16S rRNA. Functionally, forms an intersubunit bridge (bridge B4) with the 23S rRNA of the 50S subunit in the ribosome. In Prochlorococcus marinus (strain MIT 9312), this protein is Small ribosomal subunit protein uS15.